The chain runs to 508 residues: Photosystem II CP47 reaction center protein (508 aa).

6 helical membrane-spanning segments follow: residues Ser21–Ser36, Ile101–Trp115, Gly140–Phe156, Ile203–Ser218, Val237–Val252, and Ser457–Arg472.

The protein belongs to the PsbB/PsbC family. PsbB subfamily. PSII is composed of 1 copy each of membrane proteins PsbA, PsbB, PsbC, PsbD, PsbE, PsbF, PsbH, PsbI, PsbJ, PsbK, PsbL, PsbM, PsbT, PsbX, PsbY, PsbZ, Psb30/Ycf12, at least 3 peripheral proteins of the oxygen-evolving complex and a large number of cofactors. It forms dimeric complexes. Binds multiple chlorophylls. PSII binds additional chlorophylls, carotenoids and specific lipids. serves as cofactor.

The protein resides in the plastid. The protein localises to the chloroplast thylakoid membrane. One of the components of the core complex of photosystem II (PSII). It binds chlorophyll and helps catalyze the primary light-induced photochemical processes of PSII. PSII is a light-driven water:plastoquinone oxidoreductase, using light energy to abstract electrons from H(2)O, generating O(2) and a proton gradient subsequently used for ATP formation. This chain is Photosystem II CP47 reaction center protein, found in Pelargonium hortorum (Common geranium).